Consider the following 286-residue polypeptide: MKIVSTKTELEAVLAPWRAADDSIAFVPTMGNLHAGHLHLVDTAKTKARRVVVSIFVNPTQFGPDEDLAAYPRTPEQDIERLRAHQADLLYLPDAADVYPDDGQPATFVEVPGLSEQLCGKFRPGHFRGVATVVCKLLNRVRPDLALFGEKDFQQLTVIRKMVRDLDMAVTIMGVPTVREPSGLAMSSRNAYLSPEQKERASLIFRTLNQAAEAVRAGERDYARIEQEASATLEAGGFSVDYVSIRRQQDLAAPSADDSALVILAAAHLGRARLIDNVLISLDTTR.

30–37 serves as a coordination point for ATP; the sequence is MGNLHAGH. His37 functions as the Proton donor in the catalytic mechanism. Gln61 serves as a coordination point for (R)-pantoate. Gln61 serves as a coordination point for beta-alanine. An ATP-binding site is contributed by 149–152; it reads GEKD. Position 155 (Gln155) interacts with (R)-pantoate. Residues Val178 and 186–189 each bind ATP; that span reads MSSR.

This sequence belongs to the pantothenate synthetase family. As to quaternary structure, homodimer.

The protein localises to the cytoplasm. It catalyses the reaction (R)-pantoate + beta-alanine + ATP = (R)-pantothenate + AMP + diphosphate + H(+). It functions in the pathway cofactor biosynthesis; (R)-pantothenate biosynthesis; (R)-pantothenate from (R)-pantoate and beta-alanine: step 1/1. Its function is as follows. Catalyzes the condensation of pantoate with beta-alanine in an ATP-dependent reaction via a pantoyl-adenylate intermediate. This chain is Pantothenate synthetase, found in Methylococcus capsulatus (strain ATCC 33009 / NCIMB 11132 / Bath).